A 226-amino-acid chain; its full sequence is Adenylate kinase (226 aa).

Position 11–16 (11–16 (GSGKGT)) interacts with ATP. Residues 31-64 (SAGEILKHALSVTKFHFNFNTDNMLNQINSGNLV) are NMP. AMP-binding positions include 62 to 64 (NLV), 90 to 93 (GFPR), and Q97. The segment at 127–164 (GRQVHIKSGRTYHIKFNPPKLDGIDDITGEKLVIRADD) is LID. Residues R128 and 137–138 (TY) contribute to the ATP site. R161 and R172 together coordinate AMP. Q205 lines the ATP pocket.

The protein belongs to the adenylate kinase family. In terms of assembly, monomer.

It is found in the cytoplasm. The enzyme catalyses AMP + ATP = 2 ADP. The protein operates within purine metabolism; AMP biosynthesis via salvage pathway; AMP from ADP: step 1/1. Functionally, catalyzes the reversible transfer of the terminal phosphate group between ATP and AMP. Plays an important role in cellular energy homeostasis and in adenine nucleotide metabolism. The polypeptide is Adenylate kinase (Blochmanniella floridana).